The sequence spans 129 residues: uncharacterized protein (129 aa).

The protein belongs to the asfivirus C129R family.

The protein localises to the virion. In terms of biological role, plays a role in the inhibition of type I interferon signaling pathway. Mechanistically, specifically interacts with 2',3'-cGAMP and cleaves it via its phosphodiesterase activity. In turn, prevents 2',3'-cGAMP interaction with host ER-resident STING1 leading to inhibition of downstream signaling pathway and type I interferon production. This is an uncharacterized protein from Ornithodoros (relapsing fever ticks).